A 219-amino-acid chain; its full sequence is 7-cyano-7-deazaguanine synthase (219 aa).

10-20 lines the ATP pocket; it reads FSGGQDSTTCL. Zn(2+)-binding residues include Cys-186, Cys-195, Cys-198, and Cys-201.

Belongs to the QueC family. As to quaternary structure, homodimer. It depends on Zn(2+) as a cofactor.

The enzyme catalyses 7-carboxy-7-deazaguanine + NH4(+) + ATP = 7-cyano-7-deazaguanine + ADP + phosphate + H2O + H(+). It functions in the pathway purine metabolism; 7-cyano-7-deazaguanine biosynthesis. In terms of biological role, catalyzes the ATP-dependent conversion of 7-carboxy-7-deazaguanine (CDG) to 7-cyano-7-deazaguanine (preQ(0)). This Bacillus velezensis (strain DSM 23117 / BGSC 10A6 / LMG 26770 / FZB42) (Bacillus amyloliquefaciens subsp. plantarum) protein is 7-cyano-7-deazaguanine synthase.